Reading from the N-terminus, the 457-residue chain is Tryptophan aminotransferase-related protein 3 (457 aa).

The helical transmembrane segment at 6–26 threads the bilayer; sequence LLIAGSIILNLVFTIHILYNN. Residues Tyr-123, 163–164, Asn-237, 257–260, 280–283, and Arg-291 each bind pyridoxal 5'-phosphate; these read AT, DYAY, and SLSK. Residue Lys-283 is modified to N6-(pyridoxal phosphate)lysine.

The protein belongs to the alliinase family. The cofactor is pyridoxal 5'-phosphate.

It is found in the membrane. In terms of biological role, probable aminotransferase. The protein is Tryptophan aminotransferase-related protein 3 (TAR3) of Arabidopsis thaliana (Mouse-ear cress).